The primary structure comprises 282 residues: Bifunctional protein FolD (282 aa).

Residues 164 to 166, isoleucine 189, and isoleucine 230 contribute to the NADP(+) site; that span reads GAS.

It belongs to the tetrahydrofolate dehydrogenase/cyclohydrolase family. Homodimer.

It carries out the reaction (6R)-5,10-methylene-5,6,7,8-tetrahydrofolate + NADP(+) = (6R)-5,10-methenyltetrahydrofolate + NADPH. It catalyses the reaction (6R)-5,10-methenyltetrahydrofolate + H2O = (6R)-10-formyltetrahydrofolate + H(+). Its pathway is one-carbon metabolism; tetrahydrofolate interconversion. Functionally, catalyzes the oxidation of 5,10-methylenetetrahydrofolate to 5,10-methenyltetrahydrofolate and then the hydrolysis of 5,10-methenyltetrahydrofolate to 10-formyltetrahydrofolate. The polypeptide is Bifunctional protein FolD (Campylobacter jejuni subsp. jejuni serotype O:6 (strain 81116 / NCTC 11828)).